We begin with the raw amino-acid sequence, 550 residues long: MTNYIAALVDELYQLGVREAVISPGSRSTPLSVLFCEYGFQVYVGIDERSAGFFALGIAKEKERPVVLVCSSGSAVAHYFPAIVEAKHSHVPLIVLTADRPPELRQVGAPQTIDQIKFYHDYAKYFEELALPEEREGMYRYVRGVMRKAYVSSLDQGYGVAHINIPLREPLSPDLDGVDFTAGRLDYPFAWKTGEKGLTMDSSVFQDKKGIIICGGDPYADYHREVLELAERLKAPLLADPLANFRNDDHPLIMDCYDAFLKSDAVKVELKPEFIIHFGQTPVSKRLQNFTAMHQDVLYFQVNDYFQYRDPSLSISRYLVASPKAFARSVKVHNTDDGYSGRWQHYQARMRRRLNLAQDEEELFEGKLVQKLQDSLPEGSRLFVANSMAIRDVDYFLEARRQRIKVLGNRGANGIDGTVSTALGVATSGHPTVLLTGDLAFFHDLNGLLIGKNHGLNLIIVLLNNNGGAIFKYLPQSENKYFELLFMTPHGMDFSGLKTLYDLTYYEPVDYESFAQNFQEALTLSGVKVLNVKIDARLSKELHDRLTNLD.

Belongs to the TPP enzyme family. MenD subfamily. Homodimer. Requires Mg(2+) as cofactor. It depends on Mn(2+) as a cofactor. Thiamine diphosphate is required as a cofactor.

The enzyme catalyses isochorismate + 2-oxoglutarate + H(+) = 5-enolpyruvoyl-6-hydroxy-2-succinyl-cyclohex-3-ene-1-carboxylate + CO2. It participates in quinol/quinone metabolism; 1,4-dihydroxy-2-naphthoate biosynthesis; 1,4-dihydroxy-2-naphthoate from chorismate: step 2/7. The protein operates within quinol/quinone metabolism; menaquinone biosynthesis. Catalyzes the thiamine diphosphate-dependent decarboxylation of 2-oxoglutarate and the subsequent addition of the resulting succinic semialdehyde-thiamine pyrophosphate anion to isochorismate to yield 2-succinyl-5-enolpyruvyl-6-hydroxy-3-cyclohexene-1-carboxylate (SEPHCHC). The sequence is that of 2-succinyl-5-enolpyruvyl-6-hydroxy-3-cyclohexene-1-carboxylate synthase from Desulfitobacterium hafniense (strain DSM 10664 / DCB-2).